Here is a 325-residue protein sequence, read N- to C-terminus: Thiamine-monophosphate kinase (325 aa).

Mg(2+) is bound by residues aspartate 30, serine 45, threonine 46, and aspartate 47. Histidine 54 contributes to the substrate binding site. Residues aspartate 75 and aspartate 122 each contribute to the Mg(2+) site. Residues 121-122 (GD) and arginine 146 contribute to the ATP site. Residue aspartate 212 participates in Mg(2+) binding. An ATP-binding site is contributed by serine 214. Mg(2+) is bound at residue aspartate 215. 2 residues coordinate substrate: glutamate 263 and tyrosine 319.

It belongs to the thiamine-monophosphate kinase family.

It carries out the reaction thiamine phosphate + ATP = thiamine diphosphate + ADP. It participates in cofactor biosynthesis; thiamine diphosphate biosynthesis; thiamine diphosphate from thiamine phosphate: step 1/1. With respect to regulation, is markedly activated by the monovalent cations K(+), NH(4)(+), and Rb(+). Is significantly inhibited by ADP, AMP, p-chloromercuribenzoate, N-ethylmaleimide, pyrophosphate, and EDTA. Catalyzes the ATP-dependent phosphorylation of thiamine-monophosphate (TMP) to form thiamine-pyrophosphate (TPP), the active form of vitamin B1. Cannot use thiamine as substrate. Is highly specific for ATP as phosphate donor. This is Thiamine-monophosphate kinase (thiL) from Escherichia coli (strain K12).